Reading from the N-terminus, the 338-residue chain is Ketol-acid reductoisomerase (NADP(+)) (338 aa).

A KARI N-terminal Rossmann domain is found at 1 to 181 (MKVFYDKDCD…GGGRAGIIET (181 aa)). Residues 24–27 (YGSQ), R47, and S52 contribute to the NADP(+) site. H107 is an active-site residue. G133 is a binding site for NADP(+). Positions 182–327 (NFREETETDL…AKLRAMMPWI (146 aa)) constitute a KARI C-terminal knotted domain. 4 residues coordinate Mg(2+): D190, E194, E226, and E230. A substrate-binding site is contributed by S251.

This sequence belongs to the ketol-acid reductoisomerase family. Requires Mg(2+) as cofactor.

It carries out the reaction (2R)-2,3-dihydroxy-3-methylbutanoate + NADP(+) = (2S)-2-acetolactate + NADPH + H(+). It catalyses the reaction (2R,3R)-2,3-dihydroxy-3-methylpentanoate + NADP(+) = (S)-2-ethyl-2-hydroxy-3-oxobutanoate + NADPH + H(+). It functions in the pathway amino-acid biosynthesis; L-isoleucine biosynthesis; L-isoleucine from 2-oxobutanoate: step 2/4. The protein operates within amino-acid biosynthesis; L-valine biosynthesis; L-valine from pyruvate: step 2/4. Its function is as follows. Involved in the biosynthesis of branched-chain amino acids (BCAA). Catalyzes an alkyl-migration followed by a ketol-acid reduction of (S)-2-acetolactate (S2AL) to yield (R)-2,3-dihydroxy-isovalerate. In the isomerase reaction, S2AL is rearranged via a Mg-dependent methyl migration to produce 3-hydroxy-3-methyl-2-ketobutyrate (HMKB). In the reductase reaction, this 2-ketoacid undergoes a metal-dependent reduction by NADPH to yield (R)-2,3-dihydroxy-isovalerate. The chain is Ketol-acid reductoisomerase (NADP(+)) from Herminiimonas arsenicoxydans.